Reading from the N-terminus, the 458-residue chain is tRNA modification GTPase MnmE (458 aa).

The (6S)-5-formyl-5,6,7,8-tetrahydrofolate site is built by R26, E88, and R127. The 155-residue stretch at 224–378 (GLSTAIIGRP…IEERINDIFF (155 aa)) folds into the TrmE-type G domain. N234 is a K(+) binding site. GTP contacts are provided by residues 234–239 (NVGKSS), 253–259 (TDIEGTT), and 278–281 (DTAG). A Mg(2+)-binding site is contributed by S238. K(+)-binding residues include T253, I255, and T258. Residue T259 coordinates Mg(2+). Residue K458 coordinates (6S)-5-formyl-5,6,7,8-tetrahydrofolate.

The protein belongs to the TRAFAC class TrmE-Era-EngA-EngB-Septin-like GTPase superfamily. TrmE GTPase family. In terms of assembly, homodimer. Heterotetramer of two MnmE and two MnmG subunits. The cofactor is K(+).

The protein localises to the cytoplasm. Exhibits a very high intrinsic GTPase hydrolysis rate. Involved in the addition of a carboxymethylaminomethyl (cmnm) group at the wobble position (U34) of certain tRNAs, forming tRNA-cmnm(5)s(2)U34. This Streptococcus agalactiae serotype Ia (strain ATCC 27591 / A909 / CDC SS700) protein is tRNA modification GTPase MnmE.